Here is a 374-residue protein sequence, read N- to C-terminus: Chaperone protein DnaJ (374 aa).

Residues 5-70 (DYYEILGVSR…QKRAAYDQYG (66 aa)) enclose the J domain. Residues 129–207 (GVTREIRIPT…CHGHGRVEKS (79 aa)) form a CR-type zinc finger. Positions 142, 145, 159, 162, 181, 184, 195, and 198 each coordinate Zn(2+). 4 CXXCXGXG motif repeats span residues 142 to 149 (CDVCHGSG), 159 to 166 (CPTCHGQG), 181 to 188 (CPTCQGQG), and 195 to 202 (CTKCHGHG).

It belongs to the DnaJ family. Homodimer. Zn(2+) is required as a cofactor.

The protein resides in the cytoplasm. In terms of biological role, participates actively in the response to hyperosmotic and heat shock by preventing the aggregation of stress-denatured proteins and by disaggregating proteins, also in an autonomous, DnaK-independent fashion. Unfolded proteins bind initially to DnaJ; upon interaction with the DnaJ-bound protein, DnaK hydrolyzes its bound ATP, resulting in the formation of a stable complex. GrpE releases ADP from DnaK; ATP binding to DnaK triggers the release of the substrate protein, thus completing the reaction cycle. Several rounds of ATP-dependent interactions between DnaJ, DnaK and GrpE are required for fully efficient folding. Also involved, together with DnaK and GrpE, in the DNA replication of plasmids through activation of initiation proteins. The sequence is that of Chaperone protein DnaJ from Sodalis glossinidius (strain morsitans).